Consider the following 359-residue polypeptide: Methyltransferase eqxD (359 aa).

S-adenosyl-L-methionine is bound by residues 198–199, aspartate 224, 248–249, arginine 264, and arginine 265; these read GG and SF.

This sequence belongs to the class I-like SAM-binding methyltransferase superfamily. Cation-independent O-methyltransferase family.

It catalyses the reaction trichosetin + S-adenosyl-L-methionine = equisetin + S-adenosyl-L-homocysteine + H(+). The protein operates within mycotoxin biosynthesis. Methyltransferase; part of the gene cluster that mediates the biosynthesis of equisetin, a trans-fused decalin-containing tetramic acid with antimicrobial activity. The PKS module of eqxS together with the enoylreductase eqxC catalyze the formation of the polyketide unit which is then conjugated to L-serine by the condensation domain of the eqxS NRPS module. Activity of the Dieckmann cyclase domain (RED) results in release of the Dieckmann product intermediate. Diels-Alderase eqx3 is involved in endo-selective Diels-Alder cycloaddition to form the decalin ring, leading to the production of N-desmethylequisetin also called trichosetin. Subsequent N-methylation is carried out by eqxD to give equisetin. The protein is Methyltransferase eqxD of Fusarium heterosporum.